The following is a 131-amino-acid chain: uncharacterized protein (131 aa).

The segment at 99-131 (NAIQEEEIDMEQQEEKEEKPREKGKKKSVEEEF) is disordered. Over residues 102-113 (QEEEIDMEQQEE) the composition is skewed to acidic residues. Basic and acidic residues predominate over residues 114–131 (KEEKPREKGKKKSVEEEF).

This is an uncharacterized protein from Sulfolobus islandicus rod-shaped virus 1 (SIRV-1).